The chain runs to 467 residues: Acid phosphatase PHO11 (467 aa).

A signal peptide spans 1-17; that stretch reads MLKSAVYSILAASLVNA. Residue H75 is the Nucleophile of the active site. N-linked (GlcNAc...) asparagine glycosylation is found at N97, N162, N192, N250, and N315. D338 serves as the catalytic Proton donor. N-linked (GlcNAc...) asparagine glycosylation is found at N356, N390, N439, N445, and N461.

Belongs to the histidine acid phosphatase family. In terms of processing, glycosylated during secretion across the membrane.

The catalysed reaction is a phosphate monoester + H2O = an alcohol + phosphate. The chain is Acid phosphatase PHO11 (PHO11) from Saccharomyces cerevisiae (strain ATCC 204508 / S288c) (Baker's yeast).